We begin with the raw amino-acid sequence, 292 residues long: Ribosomal RNA small subunit methyltransferase A (292 aa).

Residues Asn29, Leu31, Gly56, Glu77, Asp102, and Asn127 each contribute to the S-adenosyl-L-methionine site.

It belongs to the class I-like SAM-binding methyltransferase superfamily. rRNA adenine N(6)-methyltransferase family. RsmA subfamily.

It is found in the cytoplasm. The enzyme catalyses adenosine(1518)/adenosine(1519) in 16S rRNA + 4 S-adenosyl-L-methionine = N(6)-dimethyladenosine(1518)/N(6)-dimethyladenosine(1519) in 16S rRNA + 4 S-adenosyl-L-homocysteine + 4 H(+). Functionally, specifically dimethylates two adjacent adenosines (A1518 and A1519) in the loop of a conserved hairpin near the 3'-end of 16S rRNA in the 30S particle. May play a critical role in biogenesis of 30S subunits. The sequence is that of Ribosomal RNA small subunit methyltransferase A from Bacillus pumilus (strain SAFR-032).